The primary structure comprises 104 residues: Hydrogen cyanide synthase subunit HcnA (104 aa).

The 2Fe-2S ferredoxin-type domain maps to 16–97 (ADMTIHLNGQ…GMRVETESNR (82 aa)). Residues Cys60, Cys65, Cys68, and Cys81 each coordinate [2Fe-2S] cluster.

In terms of assembly, heterotrimer of HcnA, HcnB and HcnC.

The protein localises to the cell membrane. The enzyme catalyses glycine + 2 A = hydrogen cyanide + 2 AH2 + CO2. Its activity is regulated as follows. Oxygen is necessary for cyanogenesis. Activated by succinate, glycine methyl ester, glucose and D,L-methionine in addition to glycine. Phenazine methosulfate, methylene blue, 2,6-dichlorophenolindophenol (DCIP) and ferricyanide can replace oxygen for the reaction. Inhibited by pyrrolnitrin and acriflavine at 1 mM concentration. Functionally, a three-component membrane-bound flavoenzyme that catalyzes the formation of hydrogen cyanide, a secondary metabolite, by transfer of electrons to a cyanide-resistant branch of the aerobic respiratory chain. The chain is Hydrogen cyanide synthase subunit HcnA from Pseudomonas aeruginosa (strain ATCC 15692 / DSM 22644 / CIP 104116 / JCM 14847 / LMG 12228 / 1C / PRS 101 / PAO1).